A 955-amino-acid polypeptide reads, in one-letter code: Leucine--tRNA ligase (955 aa).

Positions 66-77 (PYPSGSGLHVGH) match the 'HIGH' region motif. A 'KMSKS' region motif is present at residues 725–729 (KMGKS). Position 728 (Lys728) interacts with ATP.

The protein belongs to the class-I aminoacyl-tRNA synthetase family.

It is found in the cytoplasm. It catalyses the reaction tRNA(Leu) + L-leucine + ATP = L-leucyl-tRNA(Leu) + AMP + diphosphate. The sequence is that of Leucine--tRNA ligase from Saccharopolyspora erythraea (strain ATCC 11635 / DSM 40517 / JCM 4748 / NBRC 13426 / NCIMB 8594 / NRRL 2338).